Consider the following 180-residue polypeptide: Dynactin subunit 6 (180 aa).

This sequence belongs to the dynactin subunits 5/6 family. Dynactin subunit 6 subfamily. In terms of assembly, subunit of dynactin, a multiprotein complex part of a tripartite complex with dynein and a adapter, such as BICDL1, BICD2 or HOOK3. The dynactin complex is built around ACTR1A/ACTB filament and consists of an actin-related filament composed of a shoulder domain, a pointed end and a barbed end.

It localises to the cytoplasm. Its subcellular location is the cytoskeleton. Functionally, part of the dynactin complex that activates the molecular motor dynein for ultra-processive transport along microtubules. This is Dynactin subunit 6 (dnc-6) from Caenorhabditis elegans.